A 61-amino-acid chain; its full sequence is Arabinogalactan protein 15 (61 aa).

The first 22 residues, 1–22, serve as a signal peptide directing secretion; the sequence is MAISKASIVVLMMVIISVVASA. Pyrrolidone carboxylic acid is present on Gln23. Residues Pro27, Pro29, and Pro31 each carry the 4-hydroxyproline modification. O-linked (Ara...) hydroxyproline glycans are attached at residues Pro27, Pro29, and Pro31. Ser35 is lipidated: GPI-anchor amidated serine. Residues 36-61 constitute a propeptide, removed in mature form; it reads SAISASFVSAGVAAVAALVFGSALRI.

This sequence belongs to the AG-peptide AGP family. Post-translationally, contains 4-hydroxyproline; hydroxylated on Pro-27, Pro-29 and Pro-31. In terms of processing, O-glycosylated on hydroxyprolines; noncontiguous hydroxylproline residues are glycosylated with arabinogalactan. In terms of tissue distribution, expressed in reproductive tissues. Expressed in chalaza, funiculus, stigma, septum, style, integument and transmitting tract.

The protein resides in the cell membrane. Functionally, proteoglycan that seems to be implicated in diverse developmental roles such as differentiation, cell-cell recognition, embryogenesis and programmed cell death. In Arabidopsis thaliana (Mouse-ear cress), this protein is Arabinogalactan protein 15.